Reading from the N-terminus, the 264-residue chain is Thymidylate synthase (264 aa).

Residue Arg21 coordinates dUMP. (6R)-5,10-methylene-5,6,7,8-tetrahydrofolate is bound at residue His51. 126–127 (RR) lines the dUMP pocket. Cys146 (nucleophile) is an active-site residue. DUMP is bound by residues 166 to 169 (RSCD), Asn177, and 207 to 209 (HLY). Asp169 serves as a coordination point for (6R)-5,10-methylene-5,6,7,8-tetrahydrofolate. Residue Ala263 coordinates (6R)-5,10-methylene-5,6,7,8-tetrahydrofolate.

This sequence belongs to the thymidylate synthase family. Bacterial-type ThyA subfamily. Homodimer.

It is found in the cytoplasm. It carries out the reaction dUMP + (6R)-5,10-methylene-5,6,7,8-tetrahydrofolate = 7,8-dihydrofolate + dTMP. The protein operates within pyrimidine metabolism; dTTP biosynthesis. Its function is as follows. Catalyzes the reductive methylation of 2'-deoxyuridine-5'-monophosphate (dUMP) to 2'-deoxythymidine-5'-monophosphate (dTMP) while utilizing 5,10-methylenetetrahydrofolate (mTHF) as the methyl donor and reductant in the reaction, yielding dihydrofolate (DHF) as a by-product. This enzymatic reaction provides an intracellular de novo source of dTMP, an essential precursor for DNA biosynthesis. This is Thymidylate synthase from Shewanella denitrificans (strain OS217 / ATCC BAA-1090 / DSM 15013).